Reading from the N-terminus, the 388-residue chain is Processive diacylglycerol beta-glucosyltransferase (388 aa).

Belongs to the glycosyltransferase 28 family. UgtP subfamily.

It is found in the cell membrane. The catalysed reaction is a 1,2-diacyl-3-O-(beta-D-glucopyranosyl)-sn-glycerol + UDP-alpha-D-glucose = a 1,2-diacyl-3-O-(beta-D-Glc-(1-&gt;6)-beta-D-Glc)-sn-glycerol + UDP + H(+). The enzyme catalyses a 1,2-diacyl-3-O-(beta-D-Glc-(1-&gt;6)-beta-D-Glc)-sn-glycerol + UDP-alpha-D-glucose = a 1,2-diacyl-3-O-(beta-D-Glc-(1-&gt;6)-beta-D-Glc-(1-&gt;6)-beta-D-Glc)-sn-glycerol + UDP + H(+). It carries out the reaction a 1,2-diacyl-sn-glycerol + UDP-alpha-D-glucose = a 1,2-diacyl-3-O-(beta-D-glucopyranosyl)-sn-glycerol + UDP + H(+). Its pathway is glycolipid metabolism; diglucosyl-diacylglycerol biosynthesis. Functionally, processive glucosyltransferase involved in the biosynthesis of both the bilayer- and non-bilayer-forming membrane glucolipids. Is able to successively transfer up to three glucosyl residues to diacylglycerol (DAG), thereby catalyzing the formation of beta-monoglucosyl-DAG (3-O-(beta-D-glucopyranosyl)-1,2-diacyl-sn-glycerol), beta-diglucosyl-DAG (3-O-(beta-D-glucopyranosyl-beta-(1-&gt;6)-D-glucopyranosyl)-1,2-diacyl-sn-glycerol) and beta-triglucosyl-DAG (3-O-(beta-D-glucopyranosyl-beta-(1-&gt;6)-D-glucopyranosyl-beta-(1-&gt;6)-D-glucopyranosyl)-1,2-diacyl-sn-glycerol). Beta-diglucosyl-DAG is the predominant glycolipid found in Bacillales and is also used as a membrane anchor for lipoteichoic acid (LTA). The chain is Processive diacylglycerol beta-glucosyltransferase from Bacillus cereus (strain ATCC 14579 / DSM 31 / CCUG 7414 / JCM 2152 / NBRC 15305 / NCIMB 9373 / NCTC 2599 / NRRL B-3711).